The primary structure comprises 348 residues: Glycerol-1-phosphate dehydrogenase [NAD(P)+] (348 aa).

Residues 94–98 and Thr116 contribute to the NAD(+) site; that span reads GKVID. Asp121 is a substrate binding site. Ser125 is a binding site for NAD(+). Asp168 is a binding site for substrate. Residues Asp168 and His248 each coordinate Zn(2+). His252 serves as a coordination point for substrate. Residue His264 coordinates Zn(2+).

It belongs to the glycerol-1-phosphate dehydrogenase family. As to quaternary structure, homooctamer. Zn(2+) is required as a cofactor.

It is found in the cytoplasm. It carries out the reaction sn-glycerol 1-phosphate + NAD(+) = dihydroxyacetone phosphate + NADH + H(+). It catalyses the reaction sn-glycerol 1-phosphate + NADP(+) = dihydroxyacetone phosphate + NADPH + H(+). It functions in the pathway membrane lipid metabolism; glycerophospholipid metabolism. Functionally, catalyzes the NAD(P)H-dependent reduction of dihydroxyacetonephosphate (DHAP or glycerone phosphate) to glycerol 1-phosphate (G1P). The G1P thus generated is used as the glycerophosphate backbone of phospholipids in the cellular membranes of Archaea. The polypeptide is Glycerol-1-phosphate dehydrogenase [NAD(P)+] (Methanosphaera stadtmanae (strain ATCC 43021 / DSM 3091 / JCM 11832 / MCB-3)).